A 267-amino-acid chain; its full sequence is Dihydropteroate synthase (267 aa).

In terms of domain architecture, Pterin-binding spans 1–251 (MTKTKIMGIL…NVELNAKLAK (251 aa)). Position 11 (N11) interacts with Mg(2+). (7,8-dihydropterin-6-yl)methyl diphosphate is bound by residues T51, D84, N103, D167, K203, and 239-241 (RVH).

This sequence belongs to the DHPS family. In terms of assembly, homodimer. Mg(2+) serves as cofactor.

It catalyses the reaction (7,8-dihydropterin-6-yl)methyl diphosphate + 4-aminobenzoate = 7,8-dihydropteroate + diphosphate. The protein operates within cofactor biosynthesis; tetrahydrofolate biosynthesis; 7,8-dihydrofolate from 2-amino-4-hydroxy-6-hydroxymethyl-7,8-dihydropteridine diphosphate and 4-aminobenzoate: step 1/2. Catalyzes the condensation of para-aminobenzoate (pABA) with 6-hydroxymethyl-7,8-dihydropterin diphosphate (DHPt-PP) to form 7,8-dihydropteroate (H2Pte), the immediate precursor of folate derivatives. The chain is Dihydropteroate synthase (folP) from Staphylococcus aureus (strain MRSA252).